Consider the following 75-residue polypeptide: Small ribosomal subunit protein bS18 (75 aa).

This sequence belongs to the bacterial ribosomal protein bS18 family. As to quaternary structure, part of the 30S ribosomal subunit. Forms a tight heterodimer with protein bS6.

Functionally, binds as a heterodimer with protein bS6 to the central domain of the 16S rRNA, where it helps stabilize the platform of the 30S subunit. The chain is Small ribosomal subunit protein bS18 from Hydrogenovibrio crunogenus (strain DSM 25203 / XCL-2) (Thiomicrospira crunogena).